Here is a 542-residue protein sequence, read N- to C-terminus: Phenylacetone monooxygenase (542 aa).

Residues serine 27, glutamate 46, 54–57 (VWYW), aspartate 66, tyrosine 72, valine 119, and glutamine 152 contribute to the FAD site. 64–66 (RCD) contacts NADP(+). Residues 194-200 (TGSSGIQ), 217-218 (RT), and 336-337 (KR) contribute to the NADP(+) site. FAD is bound at residue methionine 446. Tryptophan 501 is a binding site for NADP(+).

Belongs to the FAD-binding monooxygenase family. In terms of assembly, monomer. The cofactor is FAD.

It carries out the reaction phenylacetone + NADPH + O2 + H(+) = benzyl acetate + NADP(+) + H2O. In terms of biological role, catalyzes a Baeyer-Villiger oxidation reaction, i.e. the insertion of an oxygen atom into a carbon-carbon bond adjacent to a carbonyl, which converts ketones to esters. Is most efficient with phenylacetone as substrate, leading to the formation of benzyl acetate. Can also oxidize other aromatic ketones (benzylacetone, alpha-methylphenylacetone and 4-hydroxyacetophenone), some aliphatic ketones (dodecan-2-one and bicyclohept-2-en-6-one) and sulfides (e.g. methyl 4-tolylsulfide). The sequence is that of Phenylacetone monooxygenase (pamO) from Thermobifida fusca (strain YX).